Here is a 339-residue protein sequence, read N- to C-terminus: DNA-directed RNA polymerase subunit alpha (339 aa).

Residues 1-233 are alpha N-terminal domain (alpha-NTD); the sequence is MVREEVAGST…DLFLPFLHAE (233 aa). Residues 266-339 are alpha C-terminal domain (alpha-CTD); that stretch reads GIPLNCIFID…IDLLKNKLSF (74 aa).

The protein belongs to the RNA polymerase alpha chain family. In terms of assembly, in plastids the minimal PEP RNA polymerase catalytic core is composed of four subunits: alpha, beta, beta', and beta''. When a (nuclear-encoded) sigma factor is associated with the core the holoenzyme is formed, which can initiate transcription.

It localises to the plastid. It is found in the chloroplast. It carries out the reaction RNA(n) + a ribonucleoside 5'-triphosphate = RNA(n+1) + diphosphate. Functionally, DNA-dependent RNA polymerase catalyzes the transcription of DNA into RNA using the four ribonucleoside triphosphates as substrates. In Elymus canadensis (Canada wild rye), this protein is DNA-directed RNA polymerase subunit alpha.